We begin with the raw amino-acid sequence, 856 residues long: Histone-lysine N-methyltransferase EZA1 (856 aa).

The span at 1–11 shows a compositional bias: polar residues; sequence MVTDDSNSSGR. 3 disordered regions span residues 1-34, 66-87, and 366-473; these read MVTD…GLEN, VSPF…NSNM, and NVDS…HHGS. Acidic residues predominate over residues 17 to 28; it reads DDDDDGEEEEDR. Residues 22–49 are a coiled coil; the sequence is GEEEEDRLEGLENRLSELKRKIQGERVR. The span at 68–87 shows a compositional bias: polar residues; the sequence is PFSSAASSRATAEDNGNSNM. Residues 374 to 392 show a composition bias toward basic and acidic residues; the sequence is EQEHGIRGKREVPILKDSN. The segment covering 393–419 has biased composition (polar residues); it reads DLPNLSNKKQKTAASDTKMSFVNSVPS. The span at 438 to 451 shows a compositional bias: basic and acidic residues; sequence KVNRDSEADAKEVG. The SANT domain occupies 489 to 539; that stretch reads PSTEWNPIEKDLYLKGVEIFGRNSCLIARNLLSGLKTCLDVSNYMRENEVS. The CXC domain occupies 594–693; it reads WKRIAGGKNQ…SLGEAPRRGE (100 aa). One can recognise an SET domain in the interval 707–822; it reads QRILLGKSDV…ASEELFYDYR (116 aa). Tyr-821 is an S-adenosyl-L-methionine binding site. The disordered stretch occupies residues 827–856; the sequence is QAPVWARKPEGSKKDDSAITHRRARKHQSH. Residues 833 to 845 show a composition bias toward basic and acidic residues; sequence RKPEGSKKDDSAI. Residues 838–845 carry the Nuclear localization signal motif; that stretch reads SKKDDSAI. Positions 846–856 are enriched in basic residues; sequence THRRARKHQSH.

The protein belongs to the class V-like SAM-binding methyltransferase superfamily. Histone-lysine methyltransferase family. EZ subfamily. As to quaternary structure, component of the plant homeodomain / polycomb repressive complex 2 (PHD-PRC2) large complex during prolonged cold, composed of core PRC2 components (VRN2, EZA1, FIE and MSI1), and three related PHD finger proteins (VIL1, VIL2 and VIN3) that mediates histone H3 trimethylation on 'Lys-27' H3K27me3. Interacts with TAF13. Interacts with EOL1. Interacts (via SANT domain) with HXK1 in the nucleus.

Its subcellular location is the nucleus. It catalyses the reaction L-lysyl(27)-[histone H3] + 3 S-adenosyl-L-methionine = N(6),N(6),N(6)-trimethyl-L-lysyl(27)-[histone H3] + 3 S-adenosyl-L-homocysteine + 3 H(+). In terms of biological role, polycomb group (PcG) protein. Catalytic subunit of some PcG multiprotein complex, which methylates 'Lys-27' of histone H3, leading to transcriptional repression of the affected target genes, mainly abscisic acid (ABA) responsive elements. PcG proteins act by forming multiprotein complexes, which are required to maintain the transcriptionally repressive state of homeotic genes throughout development. PcG proteins are not required to initiate repression, but to maintain it during later stages of development. Forms a nuclear complex with CLF and HXK1 to target common glucose-responsive genes and regulate glucose signaling by glucose-mediated gene repression. Affects the recruitment of HXK1 to the target chromatin. This is Histone-lysine N-methyltransferase EZA1 from Arabidopsis thaliana (Mouse-ear cress).